The following is a 336-amino-acid chain: HTH-type transcriptional regulator RafR (336 aa).

Positions 2 to 55 constitute an HTH lacI-type domain; that stretch reads SLKAIATTLGISVTTVSRALGGFSDVAASTRERVEAEARRRGYRPNTQARRLKT. The segment at residues 3-22 is a DNA-binding region (H-T-H motif); that stretch reads LKAIATTLGISVTTVSRALG.

Homodimer.

Its function is as follows. Repressor that negatively controls the expression of the raffinose (raf) operon by binding to the raf operator (rafO) DNA. Acts by binding to two operator sites, O1 and 02, which flank the -35 raf promoter box. RafR bound to 02 alone results in 45 % repression of transcription, whereas RafR bound to O1 leads to only 6% repression. The chain is HTH-type transcriptional regulator RafR from Escherichia coli.